The chain runs to 156 residues: SsrA-binding protein (156 aa).

Residues 127–156 (GKKKYDKREDLKKKDAKRDVDRAMRDRQKY) form a disordered region. Basic and acidic residues predominate over residues 132–156 (DKREDLKKKDAKRDVDRAMRDRQKY).

This sequence belongs to the SmpB family.

The protein localises to the cytoplasm. Functionally, required for rescue of stalled ribosomes mediated by trans-translation. Binds to transfer-messenger RNA (tmRNA), required for stable association of tmRNA with ribosomes. tmRNA and SmpB together mimic tRNA shape, replacing the anticodon stem-loop with SmpB. tmRNA is encoded by the ssrA gene; the 2 termini fold to resemble tRNA(Ala) and it encodes a 'tag peptide', a short internal open reading frame. During trans-translation Ala-aminoacylated tmRNA acts like a tRNA, entering the A-site of stalled ribosomes, displacing the stalled mRNA. The ribosome then switches to translate the ORF on the tmRNA; the nascent peptide is terminated with the 'tag peptide' encoded by the tmRNA and targeted for degradation. The ribosome is freed to recommence translation, which seems to be the essential function of trans-translation. The polypeptide is SsrA-binding protein (Exiguobacterium sp. (strain ATCC BAA-1283 / AT1b)).